Reading from the N-terminus, the 821-residue chain is DNA replication licensing factor MCM6 (821 aa).

Methionine 1 bears the N-acetylmethionine mark. Phosphoserine is present on residues serine 13, serine 219, and serine 271. A Phosphothreonine modification is found at threonine 278. Residues 346–553 (LYHNLCTSLF…TDYAIARRIV (208 aa)) form the MCM domain. ATP-binding residues include histidine 359, serine 399, threonine 400, alanine 401, lysine 402, serine 403, and asparagine 504. An Arginine finger motif is present at residues 528–531 (SRFD). ADP is bound by residues arginine 619 and glutamate 622. At lysine 643 the chain carries N6-acetyllysine. The segment at 676–708 (TDEGQGGVNGHADSPAPVNRFNGSSEDASQETV) is disordered. A phosphoserine mark is found at serine 689, serine 704, and serine 762. Residues 696 to 708 (FNGSSEDASQETV) show a composition bias toward polar residues. Threonine 791 is subject to Phosphothreonine.

It belongs to the MCM family. As to quaternary structure, component of the MCM2-7 complex. The complex forms a toroidal hexameric ring with the proposed subunit order MCM2-MCM6-MCM4-MCM7-MCM3-MCM5. Component of the CMG helicase complex, a hexameric ring of related MCM2-7 subunits stabilized by CDC45 and the tetrameric GINS complex. May interact with MCM10. Interacts with TIPIN. Interacts with CDT1. Interacts with MCMBP. Interacts with DDI2. O-glycosylated (O-GlcNAcylated), in a cell cycle-dependent manner.

Its subcellular location is the nucleus. The protein localises to the chromosome. It carries out the reaction ATP + H2O = ADP + phosphate + H(+). Its function is as follows. Acts as a component of the MCM2-7 complex (MCM complex) which is the replicative helicase essential for 'once per cell cycle' DNA replication initiation and elongation in eukaryotic cells. Core component of CDC45-MCM-GINS (CMG) helicase, the molecular machine that unwinds template DNA during replication, and around which the replisome is built. The active ATPase sites in the MCM2-7 ring are formed through the interaction surfaces of two neighboring subunits such that a critical structure of a conserved arginine finger motif is provided in trans relative to the ATP-binding site of the Walker A box of the adjacent subunit. The six ATPase active sites, however, are likely to contribute differentially to the complex helicase activity. In Mus musculus (Mouse), this protein is DNA replication licensing factor MCM6 (Mcm6).